Reading from the N-terminus, the 272-residue chain is 2-dehydro-3-deoxyphosphooctonate aldolase (272 aa).

It belongs to the KdsA family.

It is found in the cytoplasm. The catalysed reaction is D-arabinose 5-phosphate + phosphoenolpyruvate + H2O = 3-deoxy-alpha-D-manno-2-octulosonate-8-phosphate + phosphate. It functions in the pathway carbohydrate biosynthesis; 3-deoxy-D-manno-octulosonate biosynthesis; 3-deoxy-D-manno-octulosonate from D-ribulose 5-phosphate: step 2/3. It participates in bacterial outer membrane biogenesis; lipopolysaccharide biosynthesis. The chain is 2-dehydro-3-deoxyphosphooctonate aldolase from Geotalea uraniireducens (strain Rf4) (Geobacter uraniireducens).